Here is a 171-residue protein sequence, read N- to C-terminus: Adenine phosphoribosyltransferase (171 aa).

The protein belongs to the purine/pyrimidine phosphoribosyltransferase family. Homodimer.

It localises to the cytoplasm. It carries out the reaction AMP + diphosphate = 5-phospho-alpha-D-ribose 1-diphosphate + adenine. The protein operates within purine metabolism; AMP biosynthesis via salvage pathway; AMP from adenine: step 1/1. Catalyzes a salvage reaction resulting in the formation of AMP, that is energically less costly than de novo synthesis. In Mycoplasma mobile (strain ATCC 43663 / 163K / NCTC 11711) (Mesomycoplasma mobile), this protein is Adenine phosphoribosyltransferase.